Here is a 277-residue protein sequence, read N- to C-terminus: Sulfur carrier protein FdhD (277 aa).

Residue C123 is the Cysteine persulfide intermediate of the active site.

It belongs to the FdhD family.

It is found in the cytoplasm. Required for formate dehydrogenase (FDH) activity. Acts as a sulfur carrier protein that transfers sulfur from IscS to the molybdenum cofactor prior to its insertion into FDH. The protein is Sulfur carrier protein FdhD of Pectobacterium atrosepticum (strain SCRI 1043 / ATCC BAA-672) (Erwinia carotovora subsp. atroseptica).